Reading from the N-terminus, the 483-residue chain is Glutarate-semialdehyde dehydrogenase (483 aa).

Residues 156-157 (WN), 180-183 (KPAS), and 233-234 (GS) contribute to the NADP(+) site. The active-site Proton acceptor is E255. Position 256 (L256) interacts with NADP(+). C289 (nucleophile) is an active-site residue. Position 386 (E386) interacts with NADP(+).

Belongs to the aldehyde dehydrogenase family.

The enzyme catalyses 5-oxopentanoate + NADP(+) + H2O = glutarate + NADPH + 2 H(+). Its pathway is amino-acid degradation. Its function is as follows. Catalyzes the conversion of 5-oxopentanoate (glutarate semialdehyde) to glutarate. Involved in L-lysine degradation. In Pseudomonas aeruginosa (strain ATCC 15692 / DSM 22644 / CIP 104116 / JCM 14847 / LMG 12228 / 1C / PRS 101 / PAO1), this protein is Glutarate-semialdehyde dehydrogenase.